Here is a 319-residue protein sequence, read N- to C-terminus: Ribose-phosphate pyrophosphokinase (319 aa).

Residues 41-43 and 100-101 contribute to the ATP site; these read DGE and RQ. Mg(2+) contacts are provided by histidine 134 and aspartate 176. Lysine 199 is an active-site residue. D-ribose 5-phosphate contacts are provided by residues arginine 201, aspartate 225, and 229 to 233; that span reads DTAGT.

It belongs to the ribose-phosphate pyrophosphokinase family. Class I subfamily. In terms of assembly, homohexamer. Requires Mg(2+) as cofactor.

Its subcellular location is the cytoplasm. The catalysed reaction is D-ribose 5-phosphate + ATP = 5-phospho-alpha-D-ribose 1-diphosphate + AMP + H(+). It participates in metabolic intermediate biosynthesis; 5-phospho-alpha-D-ribose 1-diphosphate biosynthesis; 5-phospho-alpha-D-ribose 1-diphosphate from D-ribose 5-phosphate (route I): step 1/1. Its function is as follows. Involved in the biosynthesis of the central metabolite phospho-alpha-D-ribosyl-1-pyrophosphate (PRPP) via the transfer of pyrophosphoryl group from ATP to 1-hydroxyl of ribose-5-phosphate (Rib-5-P). This Clostridium perfringens (strain 13 / Type A) protein is Ribose-phosphate pyrophosphokinase.